A 164-amino-acid chain; its full sequence is Peptide methionine sulfoxide reductase MsrA (164 aa).

The active site involves cysteine 16.

The protein belongs to the MsrA Met sulfoxide reductase family.

The catalysed reaction is L-methionyl-[protein] + [thioredoxin]-disulfide + H2O = L-methionyl-(S)-S-oxide-[protein] + [thioredoxin]-dithiol. It catalyses the reaction [thioredoxin]-disulfide + L-methionine + H2O = L-methionine (S)-S-oxide + [thioredoxin]-dithiol. In terms of biological role, has an important function as a repair enzyme for proteins that have been inactivated by oxidation. Catalyzes the reversible oxidation-reduction of methionine sulfoxide in proteins to methionine. The protein is Peptide methionine sulfoxide reductase MsrA of Clostridium tetani (strain Massachusetts / E88).